We begin with the raw amino-acid sequence, 306 residues long: UDP-3-O-acyl-N-acetylglucosamine deacetylase (306 aa).

H79, H238, and D242 together coordinate Zn(2+). H265 acts as the Proton donor in catalysis.

Belongs to the LpxC family. Zn(2+) is required as a cofactor.

The catalysed reaction is a UDP-3-O-[(3R)-3-hydroxyacyl]-N-acetyl-alpha-D-glucosamine + H2O = a UDP-3-O-[(3R)-3-hydroxyacyl]-alpha-D-glucosamine + acetate. The protein operates within glycolipid biosynthesis; lipid IV(A) biosynthesis; lipid IV(A) from (3R)-3-hydroxytetradecanoyl-[acyl-carrier-protein] and UDP-N-acetyl-alpha-D-glucosamine: step 2/6. Its function is as follows. Catalyzes the hydrolysis of UDP-3-O-myristoyl-N-acetylglucosamine to form UDP-3-O-myristoylglucosamine and acetate, the committed step in lipid A biosynthesis. The sequence is that of UDP-3-O-acyl-N-acetylglucosamine deacetylase from Yersinia pseudotuberculosis serotype O:1b (strain IP 31758).